Consider the following 366-residue polypeptide: Cobalt-precorrin-5B C(1)-methyltransferase (366 aa).

This sequence belongs to the CbiD family.

It carries out the reaction Co-precorrin-5B + S-adenosyl-L-methionine = Co-precorrin-6A + S-adenosyl-L-homocysteine. Its pathway is cofactor biosynthesis; adenosylcobalamin biosynthesis; cob(II)yrinate a,c-diamide from sirohydrochlorin (anaerobic route): step 6/10. In terms of biological role, catalyzes the methylation of C-1 in cobalt-precorrin-5B to form cobalt-precorrin-6A. The chain is Cobalt-precorrin-5B C(1)-methyltransferase from Thermoanaerobacter sp. (strain X514).